Reading from the N-terminus, the 246-residue chain is 1-(5-phosphoribosyl)-5-[(5-phosphoribosylamino)methylideneamino] imidazole-4-carboxamide isomerase (246 aa).

D8 acts as the Proton acceptor in catalysis. D131 functions as the Proton donor in the catalytic mechanism.

The protein belongs to the HisA/HisF family.

It is found in the cytoplasm. The catalysed reaction is 1-(5-phospho-beta-D-ribosyl)-5-[(5-phospho-beta-D-ribosylamino)methylideneamino]imidazole-4-carboxamide = 5-[(5-phospho-1-deoxy-D-ribulos-1-ylimino)methylamino]-1-(5-phospho-beta-D-ribosyl)imidazole-4-carboxamide. It participates in amino-acid biosynthesis; L-histidine biosynthesis; L-histidine from 5-phospho-alpha-D-ribose 1-diphosphate: step 4/9. The sequence is that of 1-(5-phosphoribosyl)-5-[(5-phosphoribosylamino)methylideneamino] imidazole-4-carboxamide isomerase from Lactococcus lactis subsp. cremoris (strain SK11).